We begin with the raw amino-acid sequence, 332 residues long: Tryptophan--tRNA ligase (332 aa).

ATP-binding positions include 11–13 (TST) and 19–20 (GN). Positions 12-20 (STGKLTLGN) match the 'HIGH' region motif. Residue D140 participates in L-tryptophan binding. ATP-binding positions include 152-154 (GQD), I191, and 200-204 (KMSKS). Residues 200 to 204 (KMSKS) carry the 'KMSKS' region motif.

The protein belongs to the class-I aminoacyl-tRNA synthetase family. In terms of assembly, homodimer.

It localises to the cytoplasm. The enzyme catalyses tRNA(Trp) + L-tryptophan + ATP = L-tryptophyl-tRNA(Trp) + AMP + diphosphate + H(+). Catalyzes the attachment of tryptophan to tRNA(Trp). In Mycoplasmopsis pulmonis (strain UAB CTIP) (Mycoplasma pulmonis), this protein is Tryptophan--tRNA ligase.